The sequence spans 185 residues: Uroplakin-2 (185 aa).

Positions 1–26 are cleaved as a signal peptide; that stretch reads MASPWPVWTLSWILILLAVLVPGAAA. Positions 27 to 85 are excised as a propeptide; it reads DFNISSLSGLLSPVMTESLLVALPPCHLTGGNATLTVRRANDSKVVRSSFVVPPCRGRR. N-linked (GlcNAc...) asparagine glycans are attached at residues asparagine 29, asparagine 58, and asparagine 67. The Lumenal portion of the chain corresponds to 86-156; the sequence is ELVSVVDSGS…IGLAMARTGG (71 aa). A helical transmembrane segment spans residues 157–177; it reads MVVITVLLSVAMFLLVLGLII. Residues 178-185 are Cytoplasmic-facing; sequence ALALGARK.

The protein belongs to the uroplakin-2 family. As to quaternary structure, interacts with uroplakin-1a (UPK1A). Bladder epithelium.

Its subcellular location is the cell membrane. Its function is as follows. Component of the asymmetric unit membrane (AUM); a highly specialized biomembrane elaborated by terminally differentiated urothelial cells. May play an important role in regulating the assembly of the AUM. In Bos taurus (Bovine), this protein is Uroplakin-2 (UPK2).